The sequence spans 294 residues: uncharacterized protein (294 aa).

It localises to the mitochondrion. This is an uncharacterized protein from Zea mays (Maize).